A 177-amino-acid polypeptide reads, in one-letter code: NADH-quinone oxidoreductase subunit B (177 aa).

[4Fe-4S] cluster is bound by residues Cys-56, Cys-57, Cys-121, and Cys-151.

This sequence belongs to the complex I 20 kDa subunit family. As to quaternary structure, NDH-1 is composed of 14 different subunits. Subunits NuoB, C, D, E, F, and G constitute the peripheral sector of the complex. The cofactor is [4Fe-4S] cluster.

The protein localises to the cell inner membrane. It carries out the reaction a quinone + NADH + 5 H(+)(in) = a quinol + NAD(+) + 4 H(+)(out). Its function is as follows. NDH-1 shuttles electrons from NADH, via FMN and iron-sulfur (Fe-S) centers, to quinones in the respiratory chain. Couples the redox reaction to proton translocation (for every two electrons transferred, four hydrogen ions are translocated across the cytoplasmic membrane), and thus conserves the redox energy in a proton gradient. The chain is NADH-quinone oxidoreductase subunit B from Dinoroseobacter shibae (strain DSM 16493 / NCIMB 14021 / DFL 12).